A 715-amino-acid chain; its full sequence is Protein sneaky (715 aa).

The Cytoplasmic portion of the chain corresponds to Met-1–Arg-32. A helical transmembrane segment spans residues Phe-33–Asn-53. Residues Phe-54–Asp-66 lie on the Extracellular side of the membrane. A helical transmembrane segment spans residues Leu-67–Val-87. Topologically, residues Arg-88–Ala-109 are cytoplasmic. Residues Val-110–Val-130 traverse the membrane as a helical segment. Topologically, residues Ala-131–Lys-373 are extracellular. A helical transmembrane segment spans residues Val-374–Ile-394. Residues Asn-395 to Thr-457 are Cytoplasmic-facing. A helical transmembrane segment spans residues Val-458 to Ile-478. Residues Asp-479 to Tyr-553 lie on the Extracellular side of the membrane. A helical membrane pass occupies residues Tyr-554–Leu-574. At Arg-575 to Lys-715 the chain is on the cytoplasmic side. Residues Cys-655 to Cys-691 form an RING-type; degenerate zinc finger.

Specifically expressed in testis.

The protein localises to the cytoplasmic vesicle. It localises to the secretory vesicle. Its subcellular location is the acrosome membrane. The protein resides in the cytoplasm. It is found in the cytoplasmic vesicle membrane. Component of the sperm acrosome membrane. Required for breakdown of the sperm plasma membrane after sperm entry into the egg, which is an essential prerequisite for successful fertilization. The sequence is that of Protein sneaky from Drosophila melanogaster (Fruit fly).